A 546-amino-acid polypeptide reads, in one-letter code: uncharacterized protein (546 aa).

9 consecutive transmembrane segments (helical) span residues 27–46, 59–78, 83–100, 114–134, 143–163, 176–196, 204–224, 237–257, and 268–288; these read EALVLLSILFFVPGIFPFVF, NGLIQCYPVAAFFAVLALVT, FALIWWMYTVFNALYAIL, SVLFGLIYLAGGGFWFFAYAA, PLIILLTAVHFHYSAFLIPIF, MLYSWITWVILLSPLLIALGI, VIAVSIYMAAIYLHAFLVFTA, LSSAVLMITIAFSMIYSFGVF, and MIWIHGFVNAFGVILPALIGW.

It is found in the cell membrane. This is an uncharacterized protein from Bacillus subtilis (strain 168).